The following is a 384-amino-acid chain: Calreticulin-3 (384 aa).

A signal peptide spans 1–19 (MARALVQLWAICMLRVALA). An N-domain region spans residues 20-197 (TVYFQEEFLD…GQSIESGSIE (178 aa)). An N-linked (GlcNAc...) asparagine glycan is attached at Asn42. An intrachain disulfide couples Cys105 to Cys137. An alpha-D-glucoside contacts are provided by Tyr109, Lys111, Tyr128, and Asp135. 7 repeat units span residues 191-202 (IESGSIEYDWNL), 208-219 (ETSPAESKDWEQ), 221-230 (KDNKAQDWEK), 234-245 (DASTSKQSDWNG), 249-259 (GDWPAPMLQKP), 263-271 (DGLKPEGIH), and 273-283 (DVWLHRKMKNT). A 4 X approximate repeats region spans residues 191 to 245 (IESGSIEYDWNLTSLKKETSPAESKDWEQTKDNKAQDWEKHFLDASTSKQSDWNG). The tract at residues 198 to 294 (YDWNLTSLKK…YLTQYDLSEF (97 aa)) is P-domain. N-linked (GlcNAc...) asparagine glycosylation is present at Asn201. Residues 249–283 (GDWPAPMLQKPPYQDGLKPEGIHKDVWLHRKMKNT) are 3 X approximate repeats. The interval 295–384 (ENIGAIGLEL…FNQFHRRNEL (90 aa)) is C-domain. Glu303 contacts an alpha-D-glucoside. The Prevents secretion from ER signature appears at 381–384 (RNEL).

This sequence belongs to the calreticulin family. In terms of assembly, component of an EIF2 complex at least composed of CELF1/CUGBP1, CALR, CALR3, EIF2S1, EIF2S2, HSP90B1 and HSPA5. In terms of tissue distribution, testis specific.

It localises to the endoplasmic reticulum lumen. Its function is as follows. During spermatogenesis, may act as a lectin-independent chaperone for specific client proteins such as ADAM3. Required for sperm fertility. CALR3 capacity for calcium-binding may be absent or much lower than that of CALR. The protein is Calreticulin-3 (CALR3) of Homo sapiens (Human).